The chain runs to 150 residues: 3-dehydroquinate dehydratase (150 aa).

Tyr26 acts as the Proton acceptor in catalysis. The substrate site is built by Asn77, His83, and Asp90. His103 (proton donor) is an active-site residue. Substrate-binding positions include Leu104–Ser105 and Arg114.

The protein belongs to the type-II 3-dehydroquinase family. In terms of assembly, homododecamer.

The catalysed reaction is 3-dehydroquinate = 3-dehydroshikimate + H2O. Its pathway is metabolic intermediate biosynthesis; chorismate biosynthesis; chorismate from D-erythrose 4-phosphate and phosphoenolpyruvate: step 3/7. Catalyzes a trans-dehydration via an enolate intermediate. The polypeptide is 3-dehydroquinate dehydratase (Vibrio cholerae serotype O1 (strain ATCC 39541 / Classical Ogawa 395 / O395)).